The sequence spans 180 residues: Endothelin-2 (180 aa).

The signal sequence occupies residues 1–26 (MVALPTAWCSVALALLVALHEGKSQS). The propeptide occupies 27 to 47 (AATSEEPPAPSARARGSHLRL). Intrachain disulfides connect Cys-50–Cys-64 and Cys-52–Cys-60. Residues 71 to 180 (VNTPGQTAPY…ESSHSRWRKR (110 aa)) constitute a propeptide that is removed on maturation. The interval 97 to 112 (CECYSTRDSACVTFCH) is endothelin-like. The interval 157-180 (NFTRHQQQKATREPESSHSRWRKR) is disordered.

The protein belongs to the endothelin/sarafotoxin family.

It is found in the secreted. Functionally, endothelins are endothelium-derived vasoconstrictor peptides. This is Endothelin-2 (EDN2) from Atelerix albiventris (Middle-African hedgehog).